Here is a 245-residue protein sequence, read N- to C-terminus: tRNA pseudouridine synthase A (245 aa).

The active-site Nucleophile is the aspartate 52. Residue tyrosine 111 coordinates substrate.

Belongs to the tRNA pseudouridine synthase TruA family. As to quaternary structure, homodimer.

It carries out the reaction uridine(38/39/40) in tRNA = pseudouridine(38/39/40) in tRNA. Its function is as follows. Formation of pseudouridine at positions 38, 39 and 40 in the anticodon stem and loop of transfer RNAs. This chain is tRNA pseudouridine synthase A, found in Rickettsia akari (strain Hartford).